Consider the following 160-residue polypeptide: Ureidoglycolate lyase (160 aa).

Belongs to the ureidoglycolate lyase family. In terms of assembly, homodimer. It depends on Ni(2+) as a cofactor.

The enzyme catalyses (S)-ureidoglycolate = urea + glyoxylate. It participates in nitrogen metabolism; (S)-allantoin degradation. Functionally, catalyzes the catabolism of the allantoin degradation intermediate (S)-ureidoglycolate, generating urea and glyoxylate. Involved in the anaerobic utilization of allantoin as sole nitrogen source. Reinforces the induction of genes involved in the degradation of allantoin and glyoxylate by producing glyoxylate. This is Ureidoglycolate lyase from Shigella flexneri serotype 5b (strain 8401).